The following is a 223-amino-acid chain: Urease accessory protein UreF (223 aa).

The protein belongs to the UreF family. As to quaternary structure, ureD, UreF and UreG form a complex that acts as a GTP-hydrolysis-dependent molecular chaperone, activating the urease apoprotein by helping to assemble the nickel containing metallocenter of UreC. The UreE protein probably delivers the nickel.

The protein localises to the cytoplasm. Its function is as follows. Required for maturation of urease via the functional incorporation of the urease nickel metallocenter. The polypeptide is Urease accessory protein UreF (Sinorhizobium medicae (strain WSM419) (Ensifer medicae)).